The following is a 380-amino-acid chain: Erythronate-4-phosphate dehydrogenase (380 aa).

Ser-45 and Thr-66 together coordinate substrate. NAD(+)-binding positions include 126 to 127 (QV), Asp-146, Thr-175, 206 to 208 (ASR), and Asp-232. Residue Arg-208 is part of the active site. The active site involves Glu-237. The active-site Proton donor is His-254. Gly-257 is a binding site for NAD(+). Residue Tyr-258 coordinates substrate.

The protein belongs to the D-isomer specific 2-hydroxyacid dehydrogenase family. PdxB subfamily. Homodimer.

Its subcellular location is the cytoplasm. The enzyme catalyses 4-phospho-D-erythronate + NAD(+) = (R)-3-hydroxy-2-oxo-4-phosphooxybutanoate + NADH + H(+). Its pathway is cofactor biosynthesis; pyridoxine 5'-phosphate biosynthesis; pyridoxine 5'-phosphate from D-erythrose 4-phosphate: step 2/5. In terms of biological role, catalyzes the oxidation of erythronate-4-phosphate to 3-hydroxy-2-oxo-4-phosphonooxybutanoate. In Pseudomonas aeruginosa (strain UCBPP-PA14), this protein is Erythronate-4-phosphate dehydrogenase.